The following is a 220-amino-acid chain: Octanoyltransferase (220 aa).

One can recognise a BPL/LPL catalytic domain in the interval 31–211 (GTAADHLLLL…HFARIFDFEM (181 aa)). Substrate-binding positions include 76–83 (RGGDVTYH), 143–145 (AIG), and 156–158 (GFA). Cys174 (acyl-thioester intermediate) is an active-site residue.

Belongs to the LipB family.

The protein localises to the cytoplasm. It carries out the reaction octanoyl-[ACP] + L-lysyl-[protein] = N(6)-octanoyl-L-lysyl-[protein] + holo-[ACP] + H(+). Its pathway is protein modification; protein lipoylation via endogenous pathway; protein N(6)-(lipoyl)lysine from octanoyl-[acyl-carrier-protein]: step 1/2. Functionally, catalyzes the transfer of endogenously produced octanoic acid from octanoyl-acyl-carrier-protein onto the lipoyl domains of lipoate-dependent enzymes. Lipoyl-ACP can also act as a substrate although octanoyl-ACP is likely to be the physiological substrate. The chain is Octanoyltransferase from Solibacter usitatus (strain Ellin6076).